Reading from the N-terminus, the 447-residue chain is tRNA-2-methylthio-N(6)-dimethylallyladenosine synthase (447 aa).

Residues 3 to 120 (KKLYIKTNGC…LPALLNERLE (118 aa)) form the MTTase N-terminal domain. [4Fe-4S] cluster contacts are provided by Cys-12, Cys-49, Cys-83, Cys-157, Cys-161, and Cys-164. Residues 143 to 375 (RAEGPTAFVS…QNRLLMNAAR (233 aa)) form the Radical SAM core domain. The region spanning 378 to 441 (ESMIGSKQKI…PNSLRGRLLE (64 aa)) is the TRAM domain.

The protein belongs to the methylthiotransferase family. MiaB subfamily. In terms of assembly, monomer. [4Fe-4S] cluster serves as cofactor.

Its subcellular location is the cytoplasm. The enzyme catalyses N(6)-dimethylallyladenosine(37) in tRNA + (sulfur carrier)-SH + AH2 + 2 S-adenosyl-L-methionine = 2-methylsulfanyl-N(6)-dimethylallyladenosine(37) in tRNA + (sulfur carrier)-H + 5'-deoxyadenosine + L-methionine + A + S-adenosyl-L-homocysteine + 2 H(+). Catalyzes the methylthiolation of N6-(dimethylallyl)adenosine (i(6)A), leading to the formation of 2-methylthio-N6-(dimethylallyl)adenosine (ms(2)i(6)A) at position 37 in tRNAs that read codons beginning with uridine. This Legionella pneumophila (strain Paris) protein is tRNA-2-methylthio-N(6)-dimethylallyladenosine synthase.